The following is a 1210-amino-acid chain: Homeodomain-interacting protein kinase 1 (1210 aa).

Lysine 25 is covalently cross-linked (Glycyl lysine isopeptide (Lys-Gly) (interchain with G-Cter in SUMO); alternate). Lysine 25 is covalently cross-linked (Glycyl lysine isopeptide (Lys-Gly) (interchain with G-Cter in SUMO2); alternate). Residues lysine 120 and lysine 124 each participate in a glycyl lysine isopeptide (Lys-Gly) (interchain with G-Cter in SUMO2) cross-link. Residues 190-518 enclose the Protein kinase domain; it reads YEVLEFLGRG…PLKTLNHQFV (329 aa). ATP is bound by residues 196–204 and lysine 219; that span reads LGRGTFGQV. Aspartate 315 functions as the Proton acceptor in the catalytic mechanism. Residues 835 to 856 are disordered; sequence QQQSSSLPSKKNKQSAPVSSKS. The short motif at 844–847 is the Nuclear localization signal 1 (NLS1) element; the sequence is KKNK. Serine 872 is subject to Phosphoserine. The tract at residues 885-1093 is interaction with TP53; the sequence is PVQDQHQPII…FQHGSPLHST (209 aa). The segment at 891 to 998 is required for localization to nuclear speckles; the sequence is QPIIIPDTPS…PLKTQLGDCT (108 aa). The SUMO interaction motifs (SIM); required for nuclear localization and kinase activity stretch occupies residues 902-926; that stretch reads PVSVITIRSDTDEEEDNKYKPNSSS. A disordered region spans residues 938 to 981; that stretch reads TVNDSPDSDSSLSSPHPTDTLSALRGNSGTLLEGPGRPAADGIG. A compositionally biased stretch (low complexity) spans 941–959; that stretch reads DSPDSDSSLSSPHPTDTLS. Lysine 991 is covalently cross-linked (Glycyl lysine isopeptide (Lys-Gly) (interchain with G-Cter in SUMO2)). 2 disordered regions span residues 1046–1069 and 1084–1104; these read LSQN…APRR and FQHG…APAH. Low complexity-rich tracts occupy residues 1047-1063 and 1095-1104; these read SQNQ…ERSS and HPHLAPAPAH. Position 1200 is a phosphoserine (serine 1200). Lysine 1203 is covalently cross-linked (Glycyl lysine isopeptide (Lys-Gly) (interchain with G-Cter in SUMO)).

Belongs to the protein kinase superfamily. CMGC Ser/Thr protein kinase family. HIPK subfamily. In terms of assembly, interacts with Nkx1-2, Nkx2-5, MYB, PARK7, DAXX and p53/TP53. Part of a cytoplasmic complex made of HIPK1, DAB2IP and MAP3K5 in response to TNF. This complex formation promotes MAP3K5-JNK activation and subsequent apoptosis. Phosphorylated and activated by JNK1. Autophosphorylated. In terms of processing, sumoylated. When conjugated it is directed to nuclear speckles. SENP1-mediated desumoylation is mediated by TNF in response to stress stimuli, triggering transient translocation from nucleus to cytoplasm. Ubiquitously expressed, with high levels in reproductive tissues. Expressed in the epithelial layer of mammary gland, uterus and epididymis, in the corpus luteum, and in post-meiotic round spermatids.

It localises to the nucleus. Its subcellular location is the cytoplasm. The protein localises to the nucleus speckle. It carries out the reaction L-seryl-[protein] + ATP = O-phospho-L-seryl-[protein] + ADP + H(+). The enzyme catalyses L-threonyl-[protein] + ATP = O-phospho-L-threonyl-[protein] + ADP + H(+). Functionally, serine/threonine-protein kinase involved in transcription regulation and TNF-mediated cellular apoptosis. Plays a role as a corepressor for homeodomain transcription factors. Phosphorylates DAXX and MYB. Phosphorylates DAXX in response to stress, and mediates its translocation from the nucleus to the cytoplasm. Inactivates MYB transcription factor activity by phosphorylation. Prevents MAP3K5-JNK activation in the absence of TNF. TNF triggers its translocation to the cytoplasm in response to stress stimuli, thus activating nuclear MAP3K5-JNK by derepression and promoting apoptosis. May be involved in anti-oxidative stress responses. Involved in the regulation of eye size, lens formation and retinal lamination during late embryogenesis. Promotes angiogenesis and to be involved in erythroid differentiation. May be involved in malignant squamous cell tumor formation. Phosphorylates PAGE4 at 'Thr-51' which is critical for the ability of PAGE4 to potentiate the transcriptional activator activity of JUN. The chain is Homeodomain-interacting protein kinase 1 (Hipk1) from Mus musculus (Mouse).